A 78-amino-acid polypeptide reads, in one-letter code: uncharacterized protein (78 aa).

This is an uncharacterized protein from Enterobacteria phage RB51 (Bacteriophage RB51).